Consider the following 165-residue polypeptide: Xanthine-guanine phosphoribosyltransferase (165 aa).

Residues 41 to 42 (RG) and 98 to 106 (DDLTDTGKT) each bind 5-phospho-alpha-D-ribose 1-diphosphate. Mg(2+) is bound at residue Asp-99. Residues Asp-102 and Ile-145 each coordinate guanine. Positions 102 and 145 each coordinate xanthine. Residues 102 to 106 (DTGKT) and 144 to 145 (WI) contribute to the GMP site.

The protein belongs to the purine/pyrimidine phosphoribosyltransferase family. XGPT subfamily. In terms of assembly, homotetramer. Mg(2+) serves as cofactor.

The protein resides in the cell inner membrane. The catalysed reaction is GMP + diphosphate = guanine + 5-phospho-alpha-D-ribose 1-diphosphate. It carries out the reaction XMP + diphosphate = xanthine + 5-phospho-alpha-D-ribose 1-diphosphate. The enzyme catalyses IMP + diphosphate = hypoxanthine + 5-phospho-alpha-D-ribose 1-diphosphate. It participates in purine metabolism; GMP biosynthesis via salvage pathway; GMP from guanine: step 1/1. The protein operates within purine metabolism; XMP biosynthesis via salvage pathway; XMP from xanthine: step 1/1. Purine salvage pathway enzyme that catalyzes the transfer of the ribosyl-5-phosphate group from 5-phospho-alpha-D-ribose 1-diphosphate (PRPP) to the N9 position of the 6-oxopurines guanine and xanthine to form the corresponding ribonucleotides GMP (guanosine 5'-monophosphate) and XMP (xanthosine 5'-monophosphate), with the release of PPi. To a lesser extent, also acts on hypoxanthine. The sequence is that of Xanthine-guanine phosphoribosyltransferase from Rhizobium meliloti (strain 1021) (Ensifer meliloti).